The primary structure comprises 365 residues: MPRPILATIHLAALSHNLARVRTAAPDAKVWAVVKANAYGHGIERVFDALRSADGFALLDLDEARRLRALDWRGPILLLEGCFEARDLELCSRLGLWHTIHCQEQIDMLAAHKTQLPHRVFLKMNTGMNRLGFTPERFRAAWIRLNALPQVDEISLMQHFPDADGPKGITAQLQAFDAVTHDLPGERTLSNSAAILRHTGALAGRSDWVRPGIVLYGSAPDFPEHSASDWELQPTMTLSSRIIGLQTLAAGDTVGYGSSFVAEGPMRIGVVACGYADGYPRHCPTGTPVLVNGVRTRMVGRVSMDMITVDLTPVPRAGMGSEVTLWGRASKGGAMLPIDEVARAAGTVGYELMCAVAPRVPVAVD.

Lys-35 functions as the Proton acceptor; specific for D-alanine in the catalytic mechanism. At Lys-35 the chain carries N6-(pyridoxal phosphate)lysine. Arg-130 serves as a coordination point for substrate. Tyr-256 acts as the Proton acceptor; specific for L-alanine in catalysis. Met-304 is a binding site for substrate.

The protein belongs to the alanine racemase family. It depends on pyridoxal 5'-phosphate as a cofactor.

It carries out the reaction L-alanine = D-alanine. It participates in amino-acid biosynthesis; D-alanine biosynthesis; D-alanine from L-alanine: step 1/1. Functionally, catalyzes the interconversion of L-alanine and D-alanine. May also act on other amino acids. The chain is Alanine racemase (alr) from Polaromonas naphthalenivorans (strain CJ2).